An 88-amino-acid polypeptide reads, in one-letter code: Phosphocarrier protein HPr (88 aa).

The 88-residue stretch at 1 to 88 (MEQASFVVID…EVLKKEGLAE (88 aa)) folds into the HPr domain. His-15 serves as the catalytic Pros-phosphohistidine intermediate. Phosphoserine; by HPrK/P is present on Ser-46.

The protein belongs to the HPr family.

It localises to the cytoplasm. Its activity is regulated as follows. Phosphorylation on Ser-46 inhibits the phosphoryl transfer from enzyme I to HPr. In terms of biological role, general (non sugar-specific) component of the phosphoenolpyruvate-dependent sugar phosphotransferase system (sugar PTS). This major carbohydrate active-transport system catalyzes the phosphorylation of incoming sugar substrates concomitantly with their translocation across the cell membrane. The phosphoryl group from phosphoenolpyruvate (PEP) is transferred to the phosphoryl carrier protein HPr by enzyme I. Phospho-HPr then transfers it to the PTS EIIA domain. Its function is as follows. P-Ser-HPr interacts with the catabolite control protein A (CcpA), forming a complex that binds to DNA at the catabolite response elements cre, operator sites preceding a large number of catabolite-regulated genes. Thus, P-Ser-HPr is a corepressor in carbon catabolite repression (CCR), a mechanism that allows bacteria to coordinate and optimize the utilization of available carbon sources. P-Ser-HPr also plays a role in inducer exclusion, in which it probably interacts with several non-PTS permeases and inhibits their transport activity. The polypeptide is Phosphocarrier protein HPr (ptsH) (Listeria monocytogenes serovar 1/2a (strain ATCC BAA-679 / EGD-e)).